The following is a 292-amino-acid chain: MSTISAALVMQLRERTGAGMMECKKFLIATNGDIEQAIIEMRKAGQAKADKKADRVAAEGIIVIARSSDERTAVMLEINSETDFVARDENFTNFANAVADIALTSLPKNIEDLSNQALSSGATVEQARQELVAKIGENIKLRRLEKMHCDGVIGYYLHGSRIGVMVALKNGSEALAKDIAMHVAASKPMVVSRDQVPAEAIENEREIFTAQAKESGKPQEIIDKMIDGRINKFIDEVSLLGQPYVKDPNIKVGQLLKEKNAEVISFVRYEVGEGIEKKEDNFVEEVMAQVRT.

The segment at 82–85 is involved in Mg(2+) ion dislocation from EF-Tu; it reads TDFV.

This sequence belongs to the EF-Ts family.

The protein localises to the cytoplasm. In terms of biological role, associates with the EF-Tu.GDP complex and induces the exchange of GDP to GTP. It remains bound to the aminoacyl-tRNA.EF-Tu.GTP complex up to the GTP hydrolysis stage on the ribosome. The polypeptide is Elongation factor Ts (Legionella pneumophila (strain Lens)).